The primary structure comprises 432 residues: Tol-Pal system protein TolB (432 aa).

Residues 1-21 (MKKVIYTIVGFVFMWSTSVYA) form the signal peptide.

Belongs to the TolB family. As to quaternary structure, the Tol-Pal system is composed of five core proteins: the inner membrane proteins TolA, TolQ and TolR, the periplasmic protein TolB and the outer membrane protein Pal. They form a network linking the inner and outer membranes and the peptidoglycan layer.

The protein resides in the periplasm. In terms of biological role, part of the Tol-Pal system, which plays a role in outer membrane invagination during cell division and is important for maintaining outer membrane integrity. The protein is Tol-Pal system protein TolB of Hydrogenovibrio crunogenus (strain DSM 25203 / XCL-2) (Thiomicrospira crunogena).